Reading from the N-terminus, the 335-residue chain is 2-keto-3-deoxygluconate permease (335 aa).

The next 10 membrane-spanning stretches (helical) occupy residues 10-30, 42-62, 77-97, 100-120, 141-161, 163-183, 200-220, 224-244, 254-274, and 289-309; these read IPGGLMLVPLLLGAILHTAAP, GIITGTLPILSVWFFCIGASI, LVLTKIAVAWVVALIAAQLLP, GIEVGMLAGLSTLALVSAMDM, AFVLMSVESGPLMTMVILGSA, LASFQPHHFVGAVLPFLIGFA, QTLIPFFGFALGNTINLGVIL, LLGIAMGLLVIVVTGIPLIIA, TAGLAASSTAGAAVANPVIIA, and ALVATCVIVTSILVPILTAMY.

The protein belongs to the KdgT transporter family.

The protein resides in the cell inner membrane. It carries out the reaction 2-dehydro-3-deoxy-D-gluconate(in) + H(+)(in) = 2-dehydro-3-deoxy-D-gluconate(out) + H(+)(out). Functionally, catalyzes the proton-dependent uptake of 2-keto-3-deoxygluconate (KDG) into the cell. This is 2-keto-3-deoxygluconate permease from Tolumonas auensis (strain DSM 9187 / NBRC 110442 / TA 4).